Reading from the N-terminus, the 340-residue chain is tRNA N6-adenosine threonylcarbamoyltransferase (340 aa).

Fe cation is bound by residues histidine 111 and histidine 115. Substrate contacts are provided by residues 134–138 (IISGA), aspartate 167, glycine 180, and asparagine 273. Aspartate 301 lines the Fe cation pocket.

The protein belongs to the KAE1 / TsaD family. It depends on Fe(2+) as a cofactor.

It localises to the cytoplasm. The enzyme catalyses L-threonylcarbamoyladenylate + adenosine(37) in tRNA = N(6)-L-threonylcarbamoyladenosine(37) in tRNA + AMP + H(+). Its function is as follows. Required for the formation of a threonylcarbamoyl group on adenosine at position 37 (t(6)A37) in tRNAs that read codons beginning with adenine. Is involved in the transfer of the threonylcarbamoyl moiety of threonylcarbamoyl-AMP (TC-AMP) to the N6 group of A37, together with TsaE and TsaB. TsaD likely plays a direct catalytic role in this reaction. In Wigglesworthia glossinidia brevipalpis, this protein is tRNA N6-adenosine threonylcarbamoyltransferase.